The following is a 1213-amino-acid chain: Chitin synthase 3 (1213 aa).

Residues 1-97 (MSNFRDSSSP…TPPHQEEEED (97 aa)) are disordered. At 1 to 168 (MSNFRDSSSP…KPKHDIYFWK (168 aa)) the chain is on the cytoplasmic side. Positions 32 to 44 (IRPERSRMDESHP) are enriched in basic and acidic residues. The span at 75–87 (ELSTSRSHLSNYA) shows a compositional bias: polar residues. The helical transmembrane segment at 169 to 189 (VYCYAITFWAPAPLLKLFGLP) threads the bilayer. The Extracellular portion of the chain corresponds to 190–200 (TKDRQFAWREK). A helical membrane pass occupies residues 201–221 (IGLISCILYVGAFVAYLTFGF). The Cytoplasmic portion of the chain corresponds to 222–450 (TKTVCSSQVV…TDTIGCIASK (229 aa)). The chain crosses the membrane as a helical span at residues 451–471 (VVLYMSLVFILSVVVVKFIMA). Topologically, residues 472 to 1016 (CWFKWVTSRK…INSTVHNLFE (545 aa)) are extracellular. 2 N-linked (GlcNAc...) asparagine glycosylation sites follow: asparagine 588 and asparagine 1008. A helical transmembrane segment spans residues 1017–1037 (LVLVKDLCGTFCFSMQFVIFI). Topologically, residues 1038 to 1039 (EL) are cytoplasmic. The helical transmembrane segment at 1040–1060 (IGTLVLPAAITFTIYVIIVAI) threads the bilayer. Residues 1061 to 1065 (VSKPT) lie on the Extracellular side of the membrane. A helical membrane pass occupies residues 1066–1086 (PVMSLVLLAVIFGLPGCLIVI). Residues 1087-1213 (TVSSLSYLVY…LSQGSSSGSS (127 aa)) lie on the Cytoplasmic side of the membrane. The interval 1161–1213 (ERRSTENRKQQQQQQLTNNSSNNLAVPGAAWDPSNTGGNLIDDLSQGSSSGSS) is disordered.

This sequence belongs to the chitin synthase family. Class IV subfamily.

The protein localises to the cell membrane. It carries out the reaction [(1-&gt;4)-N-acetyl-beta-D-glucosaminyl](n) + UDP-N-acetyl-alpha-D-glucosamine = [(1-&gt;4)-N-acetyl-beta-D-glucosaminyl](n+1) + UDP + H(+). Its function is as follows. Polymerizes chitin, a structural polymer of the cell wall and septum, by transferring the sugar moiety of UDP-GlcNAc to the non-reducing end of the growing chitin polymer. This Candida albicans (Yeast) protein is Chitin synthase 3 (CHS3).